The primary structure comprises 20 residues: T cell receptor alpha joining 3 (20 aa).

In terms of assembly, alpha-beta TR is a heterodimer composed of an alpha and beta chain; disulfide-linked. The alpha-beta TR is associated with the transmembrane signaling CD3 coreceptor proteins to form the TR-CD3 (TcR or TCR). The assembly of alpha-beta TR heterodimers with CD3 occurs in the endoplasmic reticulum where a single alpha-beta TR heterodimer associates with one CD3D-CD3E heterodimer, one CD3G-CD3E heterodimer and one CD247 homodimer forming a stable octameric structure. CD3D-CD3E and CD3G-CD3E heterodimers preferentially associate with TR alpha and TR beta chains, respectively. The association of the CD247 homodimer is the last step of TcR assembly in the endoplasmic reticulum and is required for transport to the cell surface.

The protein resides in the cell membrane. Functionally, j region of the variable domain of T cell receptor (TR) alpha chain that participates in the antigen recognition. Alpha-beta T cell receptors are antigen specific receptors which are essential to the immune response and are present on the cell surface of T lymphocytes. Recognize peptide-major histocompatibility (MH) (pMH) complexes that are displayed by antigen presenting cells (APC), a prerequisite for efficient T cell adaptive immunity against pathogens. Binding of alpha-beta TR to pMH complex initiates TR-CD3 clustering on the cell surface and intracellular activation of LCK that phosphorylates the ITAM motifs of CD3G, CD3D, CD3E and CD247 enabling the recruitment of ZAP70. In turn ZAP70 phosphorylates LAT, which recruits numerous signaling molecules to form the LAT signalosome. The LAT signalosome propagates signal branching to three major signaling pathways, the calcium, the mitogen-activated protein kinase (MAPK) kinase and the nuclear factor NF-kappa-B (NF-kB) pathways, leading to the mobilization of transcription factors that are critical for gene expression and essential for T cell growth and differentiation. The T cell repertoire is generated in the thymus, by V-(D)-J rearrangement. This repertoire is then shaped by intrathymic selection events to generate a peripheral T cell pool of self-MH restricted, non-autoaggressive T cells. Post-thymic interaction of alpha-beta TR with the pMH complexes shapes TR structural and functional avidity. The protein is T cell receptor alpha joining 3 of Homo sapiens (Human).